The following is a 358-amino-acid chain: Tyrosinase ustQ (358 aa).

An N-linked (GlcNAc...) asparagine glycan is attached at Asn-28. A helical membrane pass occupies residues 37-57; that stretch reads FVPVYAGLTIISLITVTVSLV. Asn-91 and Asn-109 each carry an N-linked (GlcNAc...) asparagine glycan. Positions 128 and 137 each coordinate Cu cation. Residues Asn-172 and Asn-214 are each glycosylated (N-linked (GlcNAc...) asparagine). 3 residues coordinate Cu cation: His-266, His-270, and His-292. N-linked (GlcNAc...) asparagine glycans are attached at residues Asn-321 and Asn-325.

Belongs to the tyrosinase family. It depends on Cu(2+) as a cofactor.

It localises to the membrane. It catalyses the reaction 2 L-dopa + O2 = 2 L-dopaquinone + 2 H2O. The enzyme catalyses L-tyrosine + O2 = L-dopaquinone + H2O. Its pathway is mycotoxin biosynthesis. In terms of biological role, tyrosinase; part of the gene cluster that mediates the biosynthesis of the secondary metabolite ustiloxin B, an antimitotic tetrapeptide. First, ustA is processed by the subtilisin-like endoprotease Kex2 that is outside the ustiloxin B gene cluster, at the C-terminal side of Arg-Lys, after transfer to Golgi apparatus through the endoplasmic reticulum (ER). Cleavage by KEX2 generates 16 peptides YAIG-I to YAIG-XVI. To process the precursor peptide further, at least two peptidases are necessary to cleave the N-terminal and C-terminal sides of the Tyr-Ala-Ile-Gly core peptide which serves as backbone for the synthesis of ustiloxin B, through cyclization and modification of the tyrosine with a non-protein coding amino acid, norvaline. One of the two peptidases must be the serine peptidase ustP; and the other pepdidase is probably ustH. Macrocyclization of the core peptide derived from ustA requires the tyrosinase ustQ, as well as the homologous oxidases ustYa and ustYb, and leads to the production of the first cyclization product N-desmethylustiloxin F. For the formation of N-desmethylustiloxin F, three oxidation steps are required, hydroxylation at the benzylic position, hydroxylation at either the aromatic ring of Tyr or beta-position of Ile, and oxidative cyclization. UstQ may catalyze the oxidation of a phenol moiety, whereas the ustYa and ustYb are most likely responsible for the remaining two-step oxidations. N-desmethylustiloxin F is then methylated by ustM to yield ustiloxin F which in turn substrate of the cytochrome P450 monooxygenase ustC which catalyzes the formation of S-deoxyustiloxin H. The flavoprotein monooxygenases ustF1 and ustF2 then participate in the modification of the side chain of S-deoxyustiloxin H, leading to the synthesis of an oxime intermediate, via ustiloxin H. Finally, carboxylative dehydration performed by the cysteine desulfurase-like protein ustD yields ustiloxin B. In Aspergillus flavus (strain ATCC 200026 / FGSC A1120 / IAM 13836 / NRRL 3357 / JCM 12722 / SRRC 167), this protein is Tyrosinase ustQ.